A 102-amino-acid polypeptide reads, in one-letter code: NADH-quinone oxidoreductase subunit K 1 (102 aa).

3 consecutive transmembrane segments (helical) span residues 5 to 25 (LSHYLTVSAILFTLGVFGIFL), 31 to 51 (IVILMSVELILLSVNINMVAF), and 65 to 85 (LFILTVAAAEAAIGLAILVVF).

This sequence belongs to the complex I subunit 4L family. In terms of assembly, NDH-1 is composed of 14 different subunits. Subunits NuoA, H, J, K, L, M, N constitute the membrane sector of the complex.

The protein localises to the cell inner membrane. The enzyme catalyses a quinone + NADH + 5 H(+)(in) = a quinol + NAD(+) + 4 H(+)(out). In terms of biological role, NDH-1 shuttles electrons from NADH, via FMN and iron-sulfur (Fe-S) centers, to quinones in the respiratory chain. The immediate electron acceptor for the enzyme in this species is believed to be ubiquinone. Couples the redox reaction to proton translocation (for every two electrons transferred, four hydrogen ions are translocated across the cytoplasmic membrane), and thus conserves the redox energy in a proton gradient. The chain is NADH-quinone oxidoreductase subunit K 1 from Rhizobium etli (strain CIAT 652).